A 287-amino-acid chain; its full sequence is Glycine--tRNA ligase alpha subunit (287 aa).

This sequence belongs to the class-II aminoacyl-tRNA synthetase family. As to quaternary structure, tetramer of two alpha and two beta subunits.

Its subcellular location is the cytoplasm. It carries out the reaction tRNA(Gly) + glycine + ATP = glycyl-tRNA(Gly) + AMP + diphosphate. The protein is Glycine--tRNA ligase alpha subunit of Petrotoga mobilis (strain DSM 10674 / SJ95).